The primary structure comprises 279 residues: Zinc finger AN1 and C2H2 domain-containing stress-associated protein 11 (279 aa).

AN1-type zinc fingers lie at residues P7 to V55 and A95 to F145. Residues C13, C18, C28, C31, C36, H39, H45, C47, C101, C106, C118, C121, C126, H129, H135, and C137 each coordinate Zn(2+). Positions S152–R178 are disordered. Low complexity predominate over residues S169–R178. C2H2-type zinc fingers lie at residues E213–H236 and D250–H273.

May be involved in environmental stress response. The sequence is that of Zinc finger AN1 and C2H2 domain-containing stress-associated protein 11 (SAP11) from Arabidopsis thaliana (Mouse-ear cress).